The chain runs to 270 residues: Feruloyl esterase C (270 aa).

Positions Met1–Gly21 are cleaved as a signal peptide.

This sequence belongs to the faeC family.

Its subcellular location is the secreted. The catalysed reaction is feruloyl-polysaccharide + H2O = ferulate + polysaccharide.. Its function is as follows. Involved in degradation of plant cell walls. Hydrolyzes the feruloyl-arabinose ester bond in arabinoxylans, and the feruloyl-galactose ester bond in pectin. Active against paranitrophenyl-acetate, methyl ferulate and wheat arabinoxylan. The sequence is that of Feruloyl esterase C (faeC) from Emericella nidulans (strain FGSC A4 / ATCC 38163 / CBS 112.46 / NRRL 194 / M139) (Aspergillus nidulans).